Reading from the N-terminus, the 595-residue chain is Chaperone protein HscA homolog (595 aa).

This sequence belongs to the heat shock protein 70 family.

Chaperone involved in the maturation of iron-sulfur cluster-containing proteins. Has a low intrinsic ATPase activity which is markedly stimulated by HscB. The chain is Chaperone protein HscA homolog from Rickettsia rickettsii (strain Iowa).